Here is a 555-residue protein sequence, read N- to C-terminus: Aerobic glycerol-3-phosphate dehydrogenase (555 aa).

24–52 provides a ligand contact to FAD; sequence DLFIIGGGITGAGTALDAASRGMKVALSE.

It belongs to the FAD-dependent glycerol-3-phosphate dehydrogenase family. FAD is required as a cofactor.

It is found in the cytoplasm. It carries out the reaction a quinone + sn-glycerol 3-phosphate = dihydroxyacetone phosphate + a quinol. The protein operates within polyol metabolism; glycerol degradation via glycerol kinase pathway; glycerone phosphate from sn-glycerol 3-phosphate (aerobic route): step 1/1. This is Aerobic glycerol-3-phosphate dehydrogenase (glpD) from Bacillus subtilis (strain 168).